The primary structure comprises 307 residues: Pseudouridine-5'-phosphate glycosidase (307 aa).

Glutamate 28 (proton donor) is an active-site residue. Substrate is bound by residues lysine 89 and valine 109. Aspartate 141 contributes to the Mn(2+) binding site. 143–145 (SAD) contributes to the substrate binding site. Residue lysine 162 is the Nucleophile of the active site.

It belongs to the pseudouridine-5'-phosphate glycosidase family. As to quaternary structure, homotrimer. Requires Mn(2+) as cofactor.

It carries out the reaction D-ribose 5-phosphate + uracil = psi-UMP + H2O. Its function is as follows. Catalyzes the reversible cleavage of pseudouridine 5'-phosphate (PsiMP) to ribose 5-phosphate and uracil. Functions biologically in the cleavage direction, as part of a pseudouridine degradation pathway. In Alkaliphilus metalliredigens (strain QYMF), this protein is Pseudouridine-5'-phosphate glycosidase.